Consider the following 379-residue polypeptide: Arginine biosynthesis bifunctional protein ArgJ (379 aa).

The substrate site is built by threonine 141, lysine 163, threonine 174, glutamate 252, asparagine 374, and threonine 379. Catalysis depends on threonine 174, which acts as the Nucleophile.

It belongs to the ArgJ family. As to quaternary structure, heterotetramer of two alpha and two beta chains.

The protein resides in the cytoplasm. It carries out the reaction N(2)-acetyl-L-ornithine + L-glutamate = N-acetyl-L-glutamate + L-ornithine. The catalysed reaction is L-glutamate + acetyl-CoA = N-acetyl-L-glutamate + CoA + H(+). It functions in the pathway amino-acid biosynthesis; L-arginine biosynthesis; L-ornithine and N-acetyl-L-glutamate from L-glutamate and N(2)-acetyl-L-ornithine (cyclic): step 1/1. Its pathway is amino-acid biosynthesis; L-arginine biosynthesis; N(2)-acetyl-L-ornithine from L-glutamate: step 1/4. Functionally, catalyzes two activities which are involved in the cyclic version of arginine biosynthesis: the synthesis of N-acetylglutamate from glutamate and acetyl-CoA as the acetyl donor, and of ornithine by transacetylation between N(2)-acetylornithine and glutamate. This is Arginine biosynthesis bifunctional protein ArgJ from Aquifex aeolicus (strain VF5).